The chain runs to 131 residues: UPF0102 protein YraN (131 aa).

The segment covering 1 to 19 has biased composition (polar residues); that stretch reads MATVPTRSGSPRQLTTKQT. Positions 1 to 21 are disordered; it reads MATVPTRSGSPRQLTTKQTGD.

This sequence belongs to the UPF0102 family.

This chain is UPF0102 protein YraN, found in Shigella flexneri serotype 5b (strain 8401).